Reading from the N-terminus, the 230-residue chain is Fibrillarin-like rRNA/tRNA 2'-O-methyltransferase (230 aa).

S-adenosyl-L-methionine-binding positions include 87–88, 105–106, 130–131, and 150–153; these read TT, EF, DA, and DVAQ.

Belongs to the methyltransferase superfamily. Fibrillarin family. As to quaternary structure, interacts with nop5. Component of box C/D small ribonucleoprotein (sRNP) particles that contain rpl7ae, FlpA and nop5, plus a guide RNA.

Functionally, involved in pre-rRNA and tRNA processing. Utilizes the methyl donor S-adenosyl-L-methionine to catalyze the site-specific 2'-hydroxyl methylation of ribose moieties in rRNA and tRNA. Site specificity is provided by a guide RNA that base pairs with the substrate. Methylation occurs at a characteristic distance from the sequence involved in base pairing with the guide RNA. The polypeptide is Fibrillarin-like rRNA/tRNA 2'-O-methyltransferase (Methanococcus vannielii (strain ATCC 35089 / DSM 1224 / JCM 13029 / OCM 148 / SB)).